Here is a 348-residue protein sequence, read N- to C-terminus: Phosphoribosylformylglycinamidine cyclo-ligase (348 aa).

This sequence belongs to the AIR synthase family.

Its subcellular location is the cytoplasm. The catalysed reaction is 2-formamido-N(1)-(5-O-phospho-beta-D-ribosyl)acetamidine + ATP = 5-amino-1-(5-phospho-beta-D-ribosyl)imidazole + ADP + phosphate + H(+). Its pathway is purine metabolism; IMP biosynthesis via de novo pathway; 5-amino-1-(5-phospho-D-ribosyl)imidazole from N(2)-formyl-N(1)-(5-phospho-D-ribosyl)glycinamide: step 2/2. In Geobacter sulfurreducens (strain ATCC 51573 / DSM 12127 / PCA), this protein is Phosphoribosylformylglycinamidine cyclo-ligase.